Here is a 600-residue protein sequence, read N- to C-terminus: Elongation factor 4 (600 aa).

The 183-residue stretch at 4–186 (KNVRNFCIIA…AIVNRIPPPK (183 aa)) folds into the tr-type G domain. GTP-binding positions include 16-21 (DHGKST) and 133-136 (NKID).

The protein belongs to the TRAFAC class translation factor GTPase superfamily. Classic translation factor GTPase family. LepA subfamily.

It localises to the cell inner membrane. The enzyme catalyses GTP + H2O = GDP + phosphate + H(+). Functionally, required for accurate and efficient protein synthesis under certain stress conditions. May act as a fidelity factor of the translation reaction, by catalyzing a one-codon backward translocation of tRNAs on improperly translocated ribosomes. Back-translocation proceeds from a post-translocation (POST) complex to a pre-translocation (PRE) complex, thus giving elongation factor G a second chance to translocate the tRNAs correctly. Binds to ribosomes in a GTP-dependent manner. The polypeptide is Elongation factor 4 (Aquifex aeolicus (strain VF5)).